Here is a 486-residue protein sequence, read N- to C-terminus: Cobyric acid synthase (486 aa).

Residues 250–438 (AFRIVVPVPP…LHGMFDTPSA (189 aa)) enclose the GATase cobBQ-type domain. C331 serves as the catalytic Nucleophile. H430 is an active-site residue.

The protein belongs to the CobB/CobQ family. CobQ subfamily.

It participates in cofactor biosynthesis; adenosylcobalamin biosynthesis. In terms of biological role, catalyzes amidations at positions B, D, E, and G on adenosylcobyrinic A,C-diamide. NH(2) groups are provided by glutamine, and one molecule of ATP is hydrogenolyzed for each amidation. In Herminiimonas arsenicoxydans, this protein is Cobyric acid synthase.